A 318-amino-acid polypeptide reads, in one-letter code: Thymidylate synthase (318 aa).

DUMP is bound by residues Arg-25 and Arg-180–Arg-181. Cys-200 serves as the catalytic Nucleophile. Residues Arg-220–Asp-223, Asn-231, and His-261–Tyr-263 contribute to the dUMP site. Residue Asp-223 coordinates (6R)-5,10-methylene-5,6,7,8-tetrahydrofolate. Residue Ala-317 coordinates (6R)-5,10-methylene-5,6,7,8-tetrahydrofolate.

This sequence belongs to the thymidylate synthase family. Bacterial-type ThyA subfamily. In terms of assembly, homodimer.

The protein localises to the cytoplasm. It carries out the reaction dUMP + (6R)-5,10-methylene-5,6,7,8-tetrahydrofolate = 7,8-dihydrofolate + dTMP. It functions in the pathway pyrimidine metabolism; dTTP biosynthesis. Functionally, catalyzes the reductive methylation of 2'-deoxyuridine-5'-monophosphate (dUMP) to 2'-deoxythymidine-5'-monophosphate (dTMP) while utilizing 5,10-methylenetetrahydrofolate (mTHF) as the methyl donor and reductant in the reaction, yielding dihydrofolate (DHF) as a by-product. This enzymatic reaction provides an intracellular de novo source of dTMP, an essential precursor for DNA biosynthesis. The chain is Thymidylate synthase from Bacillus thuringiensis subsp. konkukian (strain 97-27).